Consider the following 285-residue polypeptide: Retron Ec67 DNA adenine methylase (285 aa).

Positions 7, 11, 51, and 179 each coordinate S-adenosyl-L-methionine.

It belongs to the N(4)/N(6)-methyltransferase family.

The catalysed reaction is a 2'-deoxyadenosine in DNA + S-adenosyl-L-methionine = an N(6)-methyl-2'-deoxyadenosine in DNA + S-adenosyl-L-homocysteine + H(+). In terms of biological role, an alpha subtype methylase that recognizes the double-stranded sequence 5'-GATC-3' and methylates A-2 on both strands. May play a regulatory role in the functions of the retron. The chain is Retron Ec67 DNA adenine methylase from Escherichia coli.